Here is a 105-residue protein sequence, read N- to C-terminus: 3-phenylpropionate/cinnamic acid dioxygenase ferredoxin subunit (105 aa).

The region spanning 4-99 (LFVCTVEELP…VVVKDGNIYI (96 aa)) is the Rieske domain. Residues Cys-42, His-44, Cys-62, and His-65 each contribute to the [2Fe-2S] cluster site.

This sequence belongs to the bacterial ring-hydroxylating dioxygenase ferredoxin component family. As to quaternary structure, this dioxygenase system consists of four proteins: the two subunits of the hydroxylase component (HcaE and HcaF), a ferredoxin (HcaC) and a ferredoxin reductase (HcaD). [2Fe-2S] cluster is required as a cofactor.

Its pathway is aromatic compound metabolism; 3-phenylpropanoate degradation. Its function is as follows. Part of the multicomponent 3-phenylpropionate dioxygenase, that converts 3-phenylpropionic acid (PP) and cinnamic acid (CI) into 3-phenylpropionate-dihydrodiol (PP-dihydrodiol) and cinnamic acid-dihydrodiol (CI-dihydrodiol), respectively. This protein seems to be a 2Fe-2S ferredoxin. In Photorhabdus laumondii subsp. laumondii (strain DSM 15139 / CIP 105565 / TT01) (Photorhabdus luminescens subsp. laumondii), this protein is 3-phenylpropionate/cinnamic acid dioxygenase ferredoxin subunit.